Here is a 521-residue protein sequence, read N- to C-terminus: Calcium-dependent protein kinase 33 (521 aa).

A lipid anchor (N-myristoyl glycine) is attached at Gly2. The disordered stretch occupies residues 15–56 (PQQNGERSVEIENRRRSTHQDPSKISTGTNQPPPWRNPAKHS). Positions 21-36 (RSVEIENRRRSTHQDP) are enriched in basic and acidic residues. Residues 73 to 331 (YTLSKELGRG…AAEVLKHPWL (259 aa)) enclose the Protein kinase domain. ATP contacts are provided by residues 79-87 (LGRGQFGVT) and Lys102. Catalysis depends on Asp197, which acts as the Proton acceptor. Position 237 is a phosphoserine (Ser237). The interval 337-367 (ASDKPIDSAVLSRMKQFRAMNKLKKLALKVI) is autoinhibitory domain. 4 EF-hand domains span residues 374–409 (EEIQGLKAMFANIDTDNSGTITYEELKEGLAKLGSR), 410–445 (LTEAEVKQLMDAADVDGNGSIDYIEFITATMHRHRL), 446–481 (ESNENVYKAFQHFDKDGSGYITTDELEAALKEYGMG), and 482–516 (DDATIKEILSDVDADNDGRINYDEFCAMMRSGNPQ). Asp387, Asp389, Ser391, Thr393, Glu398, Asp423, Asp425, Asn427, Ser429, Glu434, Asp459, Asp461, Ser463, Tyr465, Glu470, Asp494, Asp496, Asp498, Arg500, and Glu505 together coordinate Ca(2+).

Belongs to the protein kinase superfamily. Ser/Thr protein kinase family. CDPK subfamily. In terms of assembly, interacts with THI1. Interacts with FD and FDP. Autophosphorylated. Expressed in primary roots, leaves, inflorescences, siliques and guard cells. Expressed in the shoot apical meristem.

The protein localises to the cell membrane. It localises to the nucleus. It is found in the cytoplasm. The enzyme catalyses L-seryl-[protein] + ATP = O-phospho-L-seryl-[protein] + ADP + H(+). It catalyses the reaction L-threonyl-[protein] + ATP = O-phospho-L-threonyl-[protein] + ADP + H(+). Activated by calcium. Autophosphorylation may play an important role in the regulation of the kinase activity. Repressed by THI1 through a negative regulation of the autophosphorylation activity in the presence of Ca(2+). Functionally, ca(2+)-dependent protein kinase. Negative regulator of stomatal closure and slow anion currents. Unable to phosphorylate THI1 in vitro, but the kinase activity is essential for the stomatal closure regulation. Phosphorylates FD. May play a role in signal transduction pathways that involve calcium as a second messenger. The polypeptide is Calcium-dependent protein kinase 33 (Arabidopsis thaliana (Mouse-ear cress)).